We begin with the raw amino-acid sequence, 200 residues long: Protein GrpE (200 aa).

The span at Met-1 to Gln-12 shows a compositional bias: basic and acidic residues. The segment at Met-1 to Asp-30 is disordered.

It belongs to the GrpE family. As to quaternary structure, homodimer.

It is found in the cytoplasm. In terms of biological role, participates actively in the response to hyperosmotic and heat shock by preventing the aggregation of stress-denatured proteins, in association with DnaK and GrpE. It is the nucleotide exchange factor for DnaK and may function as a thermosensor. Unfolded proteins bind initially to DnaJ; upon interaction with the DnaJ-bound protein, DnaK hydrolyzes its bound ATP, resulting in the formation of a stable complex. GrpE releases ADP from DnaK; ATP binding to DnaK triggers the release of the substrate protein, thus completing the reaction cycle. Several rounds of ATP-dependent interactions between DnaJ, DnaK and GrpE are required for fully efficient folding. This chain is Protein GrpE, found in Vibrio cholerae serotype O1 (strain ATCC 39315 / El Tor Inaba N16961).